The sequence spans 424 residues: UDP-N-acetylglucosamine 1-carboxyvinyltransferase (424 aa).

22–23 provides a ligand contact to phosphoenolpyruvate; the sequence is KN. Residue Arg93 coordinates UDP-N-acetyl-alpha-D-glucosamine. Cys117 functions as the Proton donor in the catalytic mechanism. Cys117 is modified (2-(S-cysteinyl)pyruvic acid O-phosphothioketal). UDP-N-acetyl-alpha-D-glucosamine-binding positions include 122–126, 164–166, Asp307, and Ile329; these read RPVDL and SVG.

This sequence belongs to the EPSP synthase family. MurA subfamily.

The protein resides in the cytoplasm. The enzyme catalyses phosphoenolpyruvate + UDP-N-acetyl-alpha-D-glucosamine = UDP-N-acetyl-3-O-(1-carboxyvinyl)-alpha-D-glucosamine + phosphate. Its pathway is cell wall biogenesis; peptidoglycan biosynthesis. Cell wall formation. Adds enolpyruvyl to UDP-N-acetylglucosamine. The protein is UDP-N-acetylglucosamine 1-carboxyvinyltransferase of Haemophilus influenzae (strain ATCC 51907 / DSM 11121 / KW20 / Rd).